A 679-amino-acid polypeptide reads, in one-letter code: Protein white (679 aa).

A disordered region spans residues 1–34; it reads MGQEDQEVLIRGGKATSTSAESLNNNNEQPYEQS. Positions 15–34 are enriched in polar residues; that stretch reads ATSTSAESLNNNNEQPYEQS. An ABC transporter domain is found at 84–332; the sequence is NRVKGVFCNE…FSYIGATCPT (249 aa). 121–128 contacts ATP; sequence GSSGAGKT. The next 5 helical transmembrane spans lie at 427-445, 457-477, 507-525, 534-555, and 568-586; these read LLQT…LGQQ, AIFL…ITVF, LPLF…YPLI, FFTA…GYLI, and VGPP…FLNS. N-linked (GlcNAc...) asparagine glycans are attached at residues Asn-628 and Asn-643. The helical transmembrane segment at 651–670 threads the bilayer; the sequence is FDFIGLALLIVGFRISAYIA.

The protein belongs to the ABC transporter superfamily. ABCG family. Eye pigment precursor importer (TC 3.A.1.204) subfamily.

It is found in the membrane. Functionally, may be part of a membrane-spanning permease system necessary for the transport of pigment precursors into pigment cells responsible for eye color. The chain is Protein white (W) from Ceratitis capitata (Mediterranean fruit fly).